We begin with the raw amino-acid sequence, 423 residues long: Methionine aminopeptidase 2 (423 aa).

Residues 1–17 (MTDVIDAKPEEAKKVPP) are compositionally biased toward basic and acidic residues. The tract at residues 1–89 (MTDVIDAKPE…IQPYKDDNAY (89 aa)) is disordered. The segment covering 18–29 (EVEDEDSGDESA) has biased composition (acidic residues). The span at 41–54 (KKKKKKKKPKKKKK) shows a compositional bias: basic residues. His-176 is a substrate binding site. Residues Asp-196, Asp-207, and His-276 each contribute to the a divalent metal cation site. His-284 is a binding site for substrate. A divalent metal cation-binding residues include Glu-309 and Glu-404.

Belongs to the peptidase M24A family. Methionine aminopeptidase eukaryotic type 2 subfamily. It depends on Co(2+) as a cofactor. Zn(2+) is required as a cofactor. Requires Mn(2+) as cofactor. The cofactor is Fe(2+).

The protein resides in the cytoplasm. It catalyses the reaction Release of N-terminal amino acids, preferentially methionine, from peptides and arylamides.. Its function is as follows. Cotranslationally removes the N-terminal methionine from nascent proteins. The N-terminal methionine is often cleaved when the second residue in the primary sequence is small and uncharged (Met-Ala-, Cys, Gly, Pro, Ser, Thr, or Val). This Schizophyllum commune (strain H4-8 / FGSC 9210) (Split gill fungus) protein is Methionine aminopeptidase 2.